Here is a 202-residue protein sequence, read N- to C-terminus: Small ribosomal subunit protein uS4 (202 aa).

Residues 15 to 43 (LGDLPGLTRKAAKRSNPPGQHGNARRKRS) are disordered. Residues 90–152 (GRLDNVCFRL…KGSKKLAEGN (63 aa)) enclose the S4 RNA-binding domain.

Belongs to the universal ribosomal protein uS4 family. In terms of assembly, part of the 30S ribosomal subunit. Contacts protein S5. The interaction surface between S4 and S5 is involved in control of translational fidelity.

Its function is as follows. One of the primary rRNA binding proteins, it binds directly to 16S rRNA where it nucleates assembly of the body of the 30S subunit. Functionally, with S5 and S12 plays an important role in translational accuracy. This Prochlorococcus marinus (strain SARG / CCMP1375 / SS120) protein is Small ribosomal subunit protein uS4.